A 96-amino-acid polypeptide reads, in one-letter code: Defensin-like protein 151 (96 aa).

A signal peptide spans 1–29; sequence MKKPSQLSATILTIFVILAIGVMVKETLG. 4 cysteine pairs are disulfide-bonded: Cys-35-Cys-88, Cys-48-Cys-68, Cys-53-Cys-82, and Cys-57-Cys-84.

The protein belongs to the DEFL family.

It localises to the secreted. The polypeptide is Defensin-like protein 151 (LCR17) (Arabidopsis thaliana (Mouse-ear cress)).